We begin with the raw amino-acid sequence, 617 residues long: uncharacterized protein (617 aa).

The chain crosses the membrane as a helical span at residues 103–123 (AGVLLAKFFPLLFLYPLTYLA). Residues 200-609 (FETREPVGSG…DILEAAKPFL (410 aa)) enclose the Protein kinase domain. ATP contacts are provided by residues 206–214 (VGSGCVAQV) and Lys-302. Asp-436 acts as the Proton acceptor in catalysis.

Belongs to the protein kinase superfamily. ADCK protein kinase family.

It localises to the mitochondrion. The protein resides in the membrane. Its function is as follows. The function of this protein is not yet clear. It is not known if it has protein kinase activity and what type of substrate it would phosphorylate (Ser, Thr or Tyr). Involved in the mitochondrial import of CoQ precursors, plays a role in muscle mitochondrial function and fatty acid beta-oxidation. This is an uncharacterized protein from Mus musculus (Mouse).